The chain runs to 537 residues: Multidrug resistance protein Stp (537 aa).

The next 14 helical transmembrane spans lie at 6–26 (LLTLIATGLGLFMIFLDALIV), 46–66 (WVVASYSLGMAVFIMSAATLA), 77–97 (IGVSLFTLGSIACGLAPSIAV), 104–124 (AQGLGAAAVSVTSLALVSAAF), 136–156 (IWTAIASIGTTTGPTLGGLLV), 163–183 (SIFYVNLPMGALVLFLTLCYV), 200–220 (LLFIVAVGALVYAVIEGPQIG), 223–243 (SVQTIVMLWTAAVGCALFVWL), 262–282 (YALAIATICTVFFAVYGMLLL), 300–320 (LMILPFSAAVAIVSPLVGHLV), 327–347 (VPILAGLCMLMLGLLMLIFSE), 352–372 (ALVLVGLGLCGSGVALCLTPI), 397–417 (AIGSTIGFAVLGSVLAAWLSA), and 478–498 (VALLVATATLAVVFLAGWRWF).

Belongs to the major facilitator superfamily. EmrB family.

It is found in the cell membrane. The sequence is that of Multidrug resistance protein Stp (stp) from Mycobacterium tuberculosis (strain CDC 1551 / Oshkosh).